Reading from the N-terminus, the 153-residue chain is 6,7-dimethyl-8-ribityllumazine synthase (153 aa).

Residues F22, 56–58 (AFE), and 80–82 (CVI) each bind 5-amino-6-(D-ribitylamino)uracil. 85-86 (AT) is a binding site for (2S)-2-hydroxy-3-oxobutyl phosphate. Residue H88 is the Proton donor of the active site. F113 serves as a coordination point for 5-amino-6-(D-ribitylamino)uracil. R127 is a (2S)-2-hydroxy-3-oxobutyl phosphate binding site.

The protein belongs to the DMRL synthase family.

It catalyses the reaction (2S)-2-hydroxy-3-oxobutyl phosphate + 5-amino-6-(D-ribitylamino)uracil = 6,7-dimethyl-8-(1-D-ribityl)lumazine + phosphate + 2 H2O + H(+). Its pathway is cofactor biosynthesis; riboflavin biosynthesis; riboflavin from 2-hydroxy-3-oxobutyl phosphate and 5-amino-6-(D-ribitylamino)uracil: step 1/2. Catalyzes the formation of 6,7-dimethyl-8-ribityllumazine by condensation of 5-amino-6-(D-ribitylamino)uracil with 3,4-dihydroxy-2-butanone 4-phosphate. This is the penultimate step in the biosynthesis of riboflavin. This Endomicrobium trichonymphae protein is 6,7-dimethyl-8-ribityllumazine synthase.